A 458-amino-acid chain; its full sequence is NADH-quinone oxidoreductase subunit N (458 aa).

14 consecutive transmembrane segments (helical) span residues 4–24, 30–50, 62–82, 94–114, 118–138, 153–173, 194–214, 235–255, 261–281, 290–310, 318–338, 361–381, 397–417, and 438–458; these read LLPEITLTLIALLGQFFAVII, IISNIIILLCILSIFLTFKYS, GINIGISKSIVLLFTIISMII, LKFEFITLILLSVVGIFVAIS, FLLLFCGMELTALTSYALAGF, FILGSLVSCLSLFGISFIYGF, LGLIIGIVLFLSSIFFKLSSV, FTAASKIGMVIVLLNISKLII, INYNLIKIIAILSMLFGAFGA, LMAYSTILNIGYVLIGVLLHN, LLYILIYAVGSIGFFTCLIML, IAAIISIVMFSMIGIPPLTGF, FILAYCGIFTSVVAAFYYLKV, and LLLINYLVVGFLLLGSFIISF.

The protein belongs to the complex I subunit 2 family. As to quaternary structure, NDH-1 is composed of 14 different subunits. Subunits NuoA, H, J, K, L, M, N constitute the membrane sector of the complex.

It localises to the cell inner membrane. It catalyses the reaction a quinone + NADH + 5 H(+)(in) = a quinol + NAD(+) + 4 H(+)(out). Its function is as follows. NDH-1 shuttles electrons from NADH, via FMN and iron-sulfur (Fe-S) centers, to quinones in the respiratory chain. The immediate electron acceptor for the enzyme in this species is believed to be ubiquinone. Couples the redox reaction to proton translocation (for every two electrons transferred, four hydrogen ions are translocated across the cytoplasmic membrane), and thus conserves the redox energy in a proton gradient. In Rickettsia felis (strain ATCC VR-1525 / URRWXCal2) (Rickettsia azadi), this protein is NADH-quinone oxidoreductase subunit N.